The sequence spans 384 residues: S-adenosylmethionine synthase (384 aa).

Residue His16 participates in ATP binding. Residue Asp18 participates in Mg(2+) binding. Glu44 serves as a coordination point for K(+). L-methionine contacts are provided by Glu57 and Gln100. Positions 100–110 are flexible loop; that stretch reads QSADIAMGVDE. ATP is bound by residues 165–167, Asp240, 246–247, Ala263, and Lys267; these read DAK and RK. Asp240 serves as a coordination point for L-methionine. An L-methionine-binding site is contributed by Lys271.

The protein belongs to the AdoMet synthase family. As to quaternary structure, homotetramer; dimer of dimers. The cofactor is Mg(2+). K(+) is required as a cofactor.

The protein resides in the cytoplasm. It carries out the reaction L-methionine + ATP + H2O = S-adenosyl-L-methionine + phosphate + diphosphate. It functions in the pathway amino-acid biosynthesis; S-adenosyl-L-methionine biosynthesis; S-adenosyl-L-methionine from L-methionine: step 1/1. In terms of biological role, catalyzes the formation of S-adenosylmethionine (AdoMet) from methionine and ATP. The overall synthetic reaction is composed of two sequential steps, AdoMet formation and the subsequent tripolyphosphate hydrolysis which occurs prior to release of AdoMet from the enzyme. This is S-adenosylmethionine synthase from Teredinibacter turnerae (strain ATCC 39867 / T7901).